The following is a 687-amino-acid chain: Dictomallein (687 aa).

Disordered stretches follow at residues 1–45 (MGNG…SRRL) and 73–112 (TAGGAAPLTPAVASPAGPTGSTPGSTPGATTAPAPSSTSA). Residues 233 to 501 (PVFGTDADVQ…QAWIASRVLA (269 aa)) form the Peptidase M66 domain. His-393 provides a ligand contact to Zn(2+). Glu-394 is an active-site residue. Residues His-397 and His-403 each contribute to the Zn(2+) site.

The protein belongs to the dictomallein family. Zn(2+) is required as a cofactor.

This Burkholderia pseudomallei (strain 668) protein is Dictomallein (dtmL).